A 1196-amino-acid polypeptide reads, in one-letter code: Truncated transposon Ty1-A Gag-Pol polyprotein (1196 aa).

Positions 101–276 constitute an Integrase catalytic domain; that stretch reads NSYEPFQYLH…AGLDISTLLP (176 aa). The Mg(2+) site is built by D112 and D177. Disordered regions lie at residues 397–528, 533–552, and 571–628; these read SKAV…ETEK, RSPS…NIVP, and DLPL…DNET. Residues 401 to 410 show a composition bias toward low complexity; that stretch reads SPTDSTPPST. Polar residues predominate over residues 446–456; it reads STPQISNIEST. Over residues 479–494 the composition is skewed to basic and acidic residues; the sequence is ESSHASKSKDFRHSDS. Polar residues-rich tracts occupy residues 495 to 523 and 542 to 552; these read YSEN…QISD and PENNSSHNIVP. The short motif at 619–653 is the Bipartite nuclear localization signal element; sequence KKRSLEDNETEIKVSRDTWNTKNMRSLEPPRSKKR. Positions 779 to 917 constitute a Reverse transcriptase Ty1/copia-type domain; the sequence is NNYYITQLDI…DILGLEIKYQ (139 aa). Mg(2+)-binding residues include D787, D868, D869, D1051, E1093, and D1126. The 143-residue stretch at 1051–1193 folds into the RNase H Ty1/copia-type domain; that stretch reads DASYGNQPYY…IKTFKLLTNK (143 aa).

Initially, virus-like particles (VLPs) are composed of the structural unprocessed proteins Gag and Gag-Pol, and also contain the host initiator methionine tRNA (tRNA(i)-Met) which serves as a primer for minus-strand DNA synthesis, and a dimer of genomic Ty RNA. Processing of the polyproteins occurs within the particle and proceeds by an ordered pathway, called maturation. First, the protease (PR) is released by autocatalytic cleavage of the Gag-Pol polyprotein yielding capsid protein p45 and a Pol-p154 precursor protein. This cleavage is a prerequisite for subsequent processing of Pol-p154 at the remaining sites to release the mature structural and catalytic proteins. Maturation takes place prior to the RT reaction and is required to produce transposition-competent VLPs.

The protein resides in the cytoplasm. It is found in the nucleus. The enzyme catalyses DNA(n) + a 2'-deoxyribonucleoside 5'-triphosphate = DNA(n+1) + diphosphate. The catalysed reaction is Endonucleolytic cleavage to 5'-phosphomonoester.. Functionally, reverse transcriptase/ribonuclease H (RT) is a multifunctional enzyme that catalyzes the conversion of the retro-elements RNA genome into dsDNA within the VLP. The enzyme displays a DNA polymerase activity that can copy either DNA or RNA templates, and a ribonuclease H (RNase H) activity that cleaves the RNA strand of RNA-DNA heteroduplexes during plus-strand synthesis and hydrolyzes RNA primers. The conversion leads to a linear dsDNA copy of the retrotransposon that includes long terminal repeats (LTRs) at both ends. In terms of biological role, integrase (IN) targets the VLP to the nucleus, where a subparticle preintegration complex (PIC) containing at least integrase and the newly synthesized dsDNA copy of the retrotransposon must transit the nuclear membrane. Once in the nucleus, integrase performs the integration of the dsDNA into the host genome. This is Truncated transposon Ty1-A Gag-Pol polyprotein (TY1B-A) from Saccharomyces cerevisiae (strain ATCC 204508 / S288c) (Baker's yeast).